A 262-amino-acid polypeptide reads, in one-letter code: Tryptophan synthase alpha chain (262 aa).

Active-site proton acceptor residues include E47 and D58.

Belongs to the TrpA family. As to quaternary structure, tetramer of two alpha and two beta chains.

It catalyses the reaction (1S,2R)-1-C-(indol-3-yl)glycerol 3-phosphate + L-serine = D-glyceraldehyde 3-phosphate + L-tryptophan + H2O. The protein operates within amino-acid biosynthesis; L-tryptophan biosynthesis; L-tryptophan from chorismate: step 5/5. In terms of biological role, the alpha subunit is responsible for the aldol cleavage of indoleglycerol phosphate to indole and glyceraldehyde 3-phosphate. The polypeptide is Tryptophan synthase alpha chain (Chromobacterium violaceum (strain ATCC 12472 / DSM 30191 / JCM 1249 / CCUG 213 / NBRC 12614 / NCIMB 9131 / NCTC 9757 / MK)).